A 425-amino-acid chain; its full sequence is Adenylosuccinate synthetase (425 aa).

GTP-binding positions include 12–18 (GDEGKGK) and 40–42 (GHT). Aspartate 13 (proton acceptor) is an active-site residue. Mg(2+) contacts are provided by aspartate 13 and glycine 40. IMP-binding positions include 13–16 (DEGK), 38–41 (NAGH), threonine 130, arginine 144, glutamine 225, threonine 240, and arginine 304. The active-site Proton donor is the histidine 41. 300-306 (ATTGRPR) serves as a coordination point for substrate. GTP contacts are provided by residues arginine 306, 332-334 (KLD), and 414-416 (SVG).

Belongs to the adenylosuccinate synthetase family. As to quaternary structure, homodimer. Requires Mg(2+) as cofactor.

It localises to the cytoplasm. The catalysed reaction is IMP + L-aspartate + GTP = N(6)-(1,2-dicarboxyethyl)-AMP + GDP + phosphate + 2 H(+). Its pathway is purine metabolism; AMP biosynthesis via de novo pathway; AMP from IMP: step 1/2. Its function is as follows. Plays an important role in the de novo pathway of purine nucleotide biosynthesis. Catalyzes the first committed step in the biosynthesis of AMP from IMP. This is Adenylosuccinate synthetase from Desulfovibrio desulfuricans (strain ATCC 27774 / DSM 6949 / MB).